A 537-amino-acid polypeptide reads, in one-letter code: CTP synthase (537 aa).

Residues 1 to 268 (MPFKCIFLTG…ANFIGEKLKL (268 aa)) are amidoligase domain. Ser14 contacts CTP. Ser14 contributes to the UTP binding site. ATP-binding positions include 15–20 (SLGKGL) and Asp72. Mg(2+) contacts are provided by Asp72 and Glu142. Residues 149–151 (DIE), 188–193 (KSKPTQ), and Lys224 each bind CTP. UTP contacts are provided by residues 188-193 (KSKPTQ) and Lys224. In terms of domain architecture, Glutamine amidotransferase type-1 spans 293 to 533 (KIGVVGKYVQ…IEAALVYSKD (241 aa)). An L-glutamine-binding site is contributed by Gly352. Cys379 serves as the catalytic Nucleophile; for glutamine hydrolysis. Residues 380–383 (LGMQ), Glu403, and Arg461 each bind L-glutamine. Residues His506 and Glu508 contribute to the active site.

Belongs to the CTP synthase family. In terms of assembly, homotetramer.

It carries out the reaction UTP + L-glutamine + ATP + H2O = CTP + L-glutamate + ADP + phosphate + 2 H(+). The catalysed reaction is L-glutamine + H2O = L-glutamate + NH4(+). The enzyme catalyses UTP + NH4(+) + ATP = CTP + ADP + phosphate + 2 H(+). Its pathway is pyrimidine metabolism; CTP biosynthesis via de novo pathway; CTP from UDP: step 2/2. With respect to regulation, allosterically activated by GTP, when glutamine is the substrate; GTP has no effect on the reaction when ammonia is the substrate. The allosteric effector GTP functions by stabilizing the protein conformation that binds the tetrahedral intermediate(s) formed during glutamine hydrolysis. Inhibited by the product CTP, via allosteric rather than competitive inhibition. Catalyzes the ATP-dependent amination of UTP to CTP with either L-glutamine or ammonia as the source of nitrogen. Regulates intracellular CTP levels through interactions with the four ribonucleotide triphosphates. The sequence is that of CTP synthase from Chlamydia pneumoniae (Chlamydophila pneumoniae).